Reading from the N-terminus, the 89-residue chain is Small ribosomal subunit protein uS15 (89 aa).

Basic and acidic residues predominate over residues 1–18 (MALSAQEKDAIVKEHQTS). The interval 1 to 25 (MALSAQEKDAIVKEHQTSETDTGSP) is disordered.

It belongs to the universal ribosomal protein uS15 family. In terms of assembly, part of the 30S ribosomal subunit. Forms a bridge to the 50S subunit in the 70S ribosome, contacting the 23S rRNA.

Functionally, one of the primary rRNA binding proteins, it binds directly to 16S rRNA where it helps nucleate assembly of the platform of the 30S subunit by binding and bridging several RNA helices of the 16S rRNA. In terms of biological role, forms an intersubunit bridge (bridge B4) with the 23S rRNA of the 50S subunit in the ribosome. This Teredinibacter turnerae (strain ATCC 39867 / T7901) protein is Small ribosomal subunit protein uS15.